The following is a 210-amino-acid chain: Ribosomal RNA large subunit methyltransferase E (210 aa).

5 residues coordinate S-adenosyl-L-methionine: glycine 61, tryptophan 63, aspartate 81, aspartate 97, and aspartate 122. Lysine 162 acts as the Proton acceptor in catalysis.

It belongs to the class I-like SAM-binding methyltransferase superfamily. RNA methyltransferase RlmE family.

The protein resides in the cytoplasm. It carries out the reaction uridine(2552) in 23S rRNA + S-adenosyl-L-methionine = 2'-O-methyluridine(2552) in 23S rRNA + S-adenosyl-L-homocysteine + H(+). Its function is as follows. Specifically methylates the uridine in position 2552 of 23S rRNA at the 2'-O position of the ribose in the fully assembled 50S ribosomal subunit. The polypeptide is Ribosomal RNA large subunit methyltransferase E (Xanthomonas axonopodis pv. citri (strain 306)).